Here is a 210-residue protein sequence, read N- to C-terminus: Large ribosomal subunit protein uL4 (210 aa).

Residues 46-89 (QGTASTLTRSEVRGGGRKPYKQKGTGRARQGSIRTPLRPGGGII) form a disordered region. Residues 60-71 (GGRKPYKQKGTG) show a composition bias toward basic residues.

The protein belongs to the universal ribosomal protein uL4 family. As to quaternary structure, part of the 50S ribosomal subunit.

Functionally, one of the primary rRNA binding proteins, this protein initially binds near the 5'-end of the 23S rRNA. It is important during the early stages of 50S assembly. It makes multiple contacts with different domains of the 23S rRNA in the assembled 50S subunit and ribosome. In terms of biological role, forms part of the polypeptide exit tunnel. This Prochlorococcus marinus (strain MIT 9215) protein is Large ribosomal subunit protein uL4.